The following is a 373-amino-acid chain: tRNA-specific 2-thiouridylase MnmA (373 aa).

Residues 12-19 (GMSGGVDS) and Met38 contribute to the ATP site. Residues 98–100 (NPD) form an interaction with target base in tRNA region. Cys103 functions as the Nucleophile in the catalytic mechanism. An intrachain disulfide couples Cys103 to Cys200. Position 127 (Gly127) interacts with ATP. Residues 150 to 152 (KDQ) are interaction with tRNA. Cys200 (cysteine persulfide intermediate) is an active-site residue. The interaction with tRNA stretch occupies residues 312-313 (RY).

Belongs to the MnmA/TRMU family.

Its subcellular location is the cytoplasm. It catalyses the reaction S-sulfanyl-L-cysteinyl-[protein] + uridine(34) in tRNA + AH2 + ATP = 2-thiouridine(34) in tRNA + L-cysteinyl-[protein] + A + AMP + diphosphate + H(+). Its function is as follows. Catalyzes the 2-thiolation of uridine at the wobble position (U34) of tRNA, leading to the formation of s(2)U34. The sequence is that of tRNA-specific 2-thiouridylase MnmA from Streptococcus pneumoniae (strain P1031).